A 276-amino-acid chain; its full sequence is MAAQFFNRIGQMGLGVAVLGGVVNSALYNVEGGHRAVIFDRFTGIKENVVGEGTHFFIPWVQRPIIFDIRSQPRNVPVITGSKDLQNVNITLRILYRPIPDQLPKIYTILGQDYDERVLPSIAPEVLKAVVAQFDAGELITQREMVSQRVSQELTVRAKQFGFILDDISLTHLTFGREFTLAVEMKQVAQQEAEKARFVVEKAEQQKLASIISAEGDAEAAGLLAKSFGEAGDGLVELRRIEAAEDIAYQLSRSRGVAYLPSGQSTLLNLPSTIAQ.

This sequence belongs to the prohibitin family.

Functionally, required for larval metabolism or for the progression of the larva into a pupa. The sequence is that of Prohibitin 1 from Drosophila melanogaster (Fruit fly).